The following is a 506-amino-acid chain: Maturase K (506 aa).

It belongs to the intron maturase 2 family. MatK subfamily.

Its subcellular location is the plastid. It is found in the chloroplast. Its function is as follows. Usually encoded in the trnK tRNA gene intron. Probably assists in splicing its own and other chloroplast group II introns. This Trifolium repens (Creeping white clover) protein is Maturase K.